A 346-amino-acid chain; its full sequence is UPF0324 membrane protein FN0533 (346 aa).

Helical transmembrane passes span 5 to 22 (LYGIILCFLLALPAWKLG), 27 to 49 (LVGGPVFGIIIGIVIAILLKNRA), 62 to 81 (VLQYAVILLGFGLNLQTIIS), 86 to 108 (SLPIIVSTISTSLIIAYILAKLI), 115 to 137 (VILIGVGSSICGGSAIAATAPVI), 147 to 169 (AISVIFLFNVIAALIFPTLGDIL), 216 to 233 (LTRTLAIIPITLFLAVYN), 248 to 270 (IFPMFIVYFILASIITTVCNYFI), 283 to 305 (INNVFSFFKHLSKFFIIMAMVAI), and 315 to 337 (ILSGAKPLTLGFCCWFAISLVSI).

It belongs to the UPF0324 family.

Its subcellular location is the cell membrane. The sequence is that of UPF0324 membrane protein FN0533 from Fusobacterium nucleatum subsp. nucleatum (strain ATCC 25586 / DSM 15643 / BCRC 10681 / CIP 101130 / JCM 8532 / KCTC 2640 / LMG 13131 / VPI 4355).